A 118-amino-acid chain; its full sequence is uncharacterized protein (118 aa).

The segment at 49 to 80 is disordered; the sequence is SKEEHTTSAANLHPRKKKRMPPRRAEKNKAPN. Basic residues predominate over residues 61–70; it reads HPRKKKRMPP.

This is an uncharacterized protein from Saccharomyces cerevisiae (strain ATCC 204508 / S288c) (Baker's yeast).